A 234-amino-acid chain; its full sequence is uncharacterized protein (234 aa).

Disordered regions lie at residues 1-65 (MTSV…RRGP) and 182-234 (ARGA…GRKT).

This is an uncharacterized protein from Homo sapiens (Human).